Here is a 236-residue protein sequence, read N- to C-terminus: Capsid protein (236 aa).

The disordered stretch occupies residues 1-46; that stretch reads MAASSRSTRGRKQRGRSVEAKSRAIRANPPVPRPNPQRNRPPPAGT. Positions 1–51 are r domain, interaction with RNA; that stretch reads MAASSRSTRGRKQRGRSVEAKSRAIRANPPVPRPNPQRNRPPPAGTTCSMS. Over residues 29–44 the composition is skewed to pro residues; that stretch reads PPVPRPNPQRNRPPPA. The interval 52-217 is s domain, virion shell; the sequence is EILLAVSATT…QIKISYSVSY (166 aa). A p domain, projecting region spans residues 218–236; that stretch reads RGAAILQPALVPGPGLANH.

This sequence belongs to the icosahedral plant coat protein family. Homomultimer.

Its subcellular location is the virion. Functionally, capsid protein self-assembles to form an icosahedral capsid with a T=3 symmetry, about 28-34 nm in diameter, and consisting of 180 capsid proteins. This is Capsid protein from Zea mays (Maize).